Reading from the N-terminus, the 91-residue chain is Large ribosomal subunit protein bL27 (91 aa).

The interval 1–26 (MAHKKGVGSSRNGRDSNPKMRGVKRF) is disordered.

This sequence belongs to the bacterial ribosomal protein bL27 family.

This is Large ribosomal subunit protein bL27 from Chloroflexus aurantiacus (strain ATCC 29366 / DSM 635 / J-10-fl).